Consider the following 1422-residue polypeptide: DNA-directed RNA polymerase subunit beta (1422 aa).

The disordered stretch occupies residues 1392 to 1422 (QAAREAAERDLGGGPLGAPRGAVASGEKSSA).

Belongs to the RNA polymerase beta chain family. The RNAP catalytic core consists of 2 alpha, 1 beta, 1 beta' and 1 omega subunit. When a sigma factor is associated with the core the holoenzyme is formed, which can initiate transcription.

The catalysed reaction is RNA(n) + a ribonucleoside 5'-triphosphate = RNA(n+1) + diphosphate. DNA-dependent RNA polymerase catalyzes the transcription of DNA into RNA using the four ribonucleoside triphosphates as substrates. This chain is DNA-directed RNA polymerase subunit beta, found in Anaeromyxobacter dehalogenans (strain 2CP-1 / ATCC BAA-258).